We begin with the raw amino-acid sequence, 309 residues long: Malate dehydrogenase (309 aa).

Residues G7–G12 and D32 each bind NAD(+). Substrate is bound by residues R81 and R87. NAD(+)-binding positions include N94 and V117–N119. Residues N119 and R150 each contribute to the substrate site. Catalysis depends on H174, which acts as the Proton acceptor.

Belongs to the LDH/MDH superfamily. MDH type 3 family.

It catalyses the reaction (S)-malate + NAD(+) = oxaloacetate + NADH + H(+). Its function is as follows. Catalyzes the reversible oxidation of malate to oxaloacetate. The polypeptide is Malate dehydrogenase (Chlorobium phaeovibrioides (strain DSM 265 / 1930) (Prosthecochloris vibrioformis (strain DSM 265))).